Consider the following 201-residue polypeptide: Probable GTP-binding protein EngB (201 aa).

The EngB-type G domain occupies 22 to 195; the sequence is TQPEFAFAGK…WRCIEQFLEV (174 aa). GTP-binding positions include 30–37, 57–61, 75–78, 142–145, and 174–176; these read GKSNVGKS, GKTQT, DLPG, TKLD, and FSS. Positions 37 and 59 each coordinate Mg(2+).

This sequence belongs to the TRAFAC class TrmE-Era-EngA-EngB-Septin-like GTPase superfamily. EngB GTPase family. Mg(2+) serves as cofactor.

Functionally, necessary for normal cell division and for the maintenance of normal septation. The polypeptide is Probable GTP-binding protein EngB (Lachnoclostridium phytofermentans (strain ATCC 700394 / DSM 18823 / ISDg) (Clostridium phytofermentans)).